Here is a 1456-residue protein sequence, read N- to C-terminus: Macrophage mannose receptor 1 (1456 aa).

The N-terminal stretch at 1-18 (MRLPLLLVFASVIPGAVL) is a signal peptide. Residues 19–1389 (LLDTRQFLIY…DPSKPSSNVA (1371 aa)) are Extracellular-facing. A Ricin B-type lectin domain is found at 22 to 142 (TRQFLIYNED…SGLWSRWKIY (121 aa)). 2 cysteine pairs are disulfide-bonded: cysteine 35-cysteine 49 and cysteine 74-cysteine 91. Asparagine 104 carries an N-linked (GlcNAc...) asparagine glycan. The region spanning 163–211 (ANGATCAFPFKFENKWYADCTSAGRSDGWLWCGTTTDYDTDKLFGYCPL) is the Fibronectin type-II domain. Cystine bridges form between cysteine 168-cysteine 194, cysteine 182-cysteine 209, cysteine 247-cysteine 340, and cysteine 316-cysteine 332. The C-type lectin 1 domain occupies 225 to 341 (LTSVSYQINS…CVQKLGYICK (117 aa)). A glycan (N-linked (GlcNAc...) asparagine) is linked at asparagine 344. C-type lectin domains lie at 369–487 (YAGH…YICK), 511–626 (HHFY…FVCK), 655–778 (RTSL…WICQ), and 807–923 (YKDY…FICQ). Disulfide bonds link cysteine 391/cysteine 486 and cysteine 463/cysteine 478. N-linked (GlcNAc...) asparagine glycosylation is present at asparagine 529. 7 cysteine pairs are disulfide-bonded: cysteine 532–cysteine 625, cysteine 600–cysteine 617, cysteine 646–cysteine 659, cysteine 680–cysteine 777, cysteine 753–cysteine 769, cysteine 828–cysteine 922, and cysteine 899–cysteine 914. 2 N-linked (GlcNAc...) asparagine glycosylation sites follow: asparagine 926 and asparagine 930. C-type lectin domains lie at 952–1080 (YSNK…YICQ), 1102–1213 (YGKS…FLCK), and 1241–1356 (FHGH…YICK). 6 disulfide bridges follow: cysteine 977-cysteine 1079, cysteine 1052-cysteine 1071, cysteine 1123-cysteine 1212, cysteine 1190-cysteine 1204, cysteine 1263-cysteine 1355, and cysteine 1332-cysteine 1347. The N-linked (GlcNAc...) asparagine glycan is linked to asparagine 1160. A glycan (N-linked (GlcNAc...) asparagine) is linked at asparagine 1205. The chain crosses the membrane as a helical span at residues 1390-1410 (GVVIIVILLILTGAGLAAYFF). The Cytoplasmic segment spans residues 1411 to 1456 (YKKRRVHLPQEGAFENTLYFNSQSSPGTSDMKDLVGNIEQNEHSVI).

In terms of assembly, (Microbial infection) Interacts with Dengue virus. (Microbial infection) May act as a receptor for hepatitis B virus, enabling uptake of the virus in hepatic dendritic cells.

It is found in the endosome membrane. The protein resides in the cell membrane. In terms of biological role, mediates the endocytosis of glycoproteins by macrophages. Binds both sulfated and non-sulfated polysaccharide chains. Functionally, (Microbial infection) Acts as a phagocytic receptor for bacteria, fungi and other pathogens. Its function is as follows. (Microbial infection) Acts as a receptor for Dengue virus envelope protein E. (Microbial infection) Interacts with Hepatitis B virus envelope protein. The polypeptide is Macrophage mannose receptor 1 (MRC1) (Homo sapiens (Human)).